The primary structure comprises 233 residues: 5'-methylthioadenosine/S-adenosylhomocysteine nucleosidase (233 aa).

Residue E12 is the Proton acceptor of the active site. Residues G78, I152, and 173 to 174 contribute to the substrate site; that span reads ME. D197 acts as the Proton donor in catalysis.

The protein belongs to the PNP/UDP phosphorylase family. MtnN subfamily. As to quaternary structure, homodimer.

It catalyses the reaction S-adenosyl-L-homocysteine + H2O = S-(5-deoxy-D-ribos-5-yl)-L-homocysteine + adenine. The catalysed reaction is S-methyl-5'-thioadenosine + H2O = 5-(methylsulfanyl)-D-ribose + adenine. The enzyme catalyses 5'-deoxyadenosine + H2O = 5-deoxy-D-ribose + adenine. The protein operates within amino-acid biosynthesis; L-methionine biosynthesis via salvage pathway; S-methyl-5-thio-alpha-D-ribose 1-phosphate from S-methyl-5'-thioadenosine (hydrolase route): step 1/2. Catalyzes the irreversible cleavage of the glycosidic bond in both 5'-methylthioadenosine (MTA) and S-adenosylhomocysteine (SAH/AdoHcy) to adenine and the corresponding thioribose, 5'-methylthioribose and S-ribosylhomocysteine, respectively. Also cleaves 5'-deoxyadenosine, a toxic by-product of radical S-adenosylmethionine (SAM) enzymes, into 5-deoxyribose and adenine. Thus, is required for in vivo function of the radical SAM enzymes biotin synthase and lipoic acid synthase, that are inhibited by 5'-deoxyadenosine accumulation. The chain is 5'-methylthioadenosine/S-adenosylhomocysteine nucleosidase from Yersinia enterocolitica serotype O:8 / biotype 1B (strain NCTC 13174 / 8081).